Here is an 83-residue protein sequence, read N- to C-terminus: uncharacterized protein (83 aa).

The helical transmembrane segment at 58–78 (AVLLWIAIIATLGNIVVVGVV) threads the bilayer.

The protein localises to the membrane. This is an uncharacterized protein from Homo sapiens (Human).